A 223-amino-acid polypeptide reads, in one-letter code: Ribonuclease HII (223 aa).

One can recognise an RNase H type-2 domain in the interval 32–223; it reads LYIAGVDEVG…LKKRYRDYMS (192 aa). Positions 38, 39, and 130 each coordinate a divalent metal cation.

It belongs to the RNase HII family. Mn(2+) is required as a cofactor. Mg(2+) serves as cofactor.

It is found in the cytoplasm. It carries out the reaction Endonucleolytic cleavage to 5'-phosphomonoester.. Endonuclease that specifically degrades the RNA of RNA-DNA hybrids. The protein is Ribonuclease HII of Bartonella henselae (strain ATCC 49882 / DSM 28221 / CCUG 30454 / Houston 1) (Rochalimaea henselae).